Reading from the N-terminus, the 273-residue chain is Dermonecrotic toxin LspiSicTox-betaIE1ii (273 aa).

His-5 is an active-site residue. 2 residues coordinate Mg(2+): Glu-25 and Asp-27. His-41 serves as the catalytic Nucleophile. Intrachain disulfides connect Cys-45-Cys-51 and Cys-47-Cys-189. Residue Asp-85 coordinates Mg(2+).

Belongs to the arthropod phospholipase D family. Class II subfamily. Requires Mg(2+) as cofactor. As to expression, expressed by the venom gland.

It is found in the secreted. The enzyme catalyses an N-(acyl)-sphingosylphosphocholine = an N-(acyl)-sphingosyl-1,3-cyclic phosphate + choline. It carries out the reaction an N-(acyl)-sphingosylphosphoethanolamine = an N-(acyl)-sphingosyl-1,3-cyclic phosphate + ethanolamine. It catalyses the reaction a 1-acyl-sn-glycero-3-phosphocholine = a 1-acyl-sn-glycero-2,3-cyclic phosphate + choline. The catalysed reaction is a 1-acyl-sn-glycero-3-phosphoethanolamine = a 1-acyl-sn-glycero-2,3-cyclic phosphate + ethanolamine. Functionally, dermonecrotic toxins cleave the phosphodiester linkage between the phosphate and headgroup of certain phospholipids (sphingolipid and lysolipid substrates), forming an alcohol (often choline) and a cyclic phosphate. This toxin acts on sphingomyelin (SM). It may also act on ceramide phosphoethanolamine (CPE), lysophosphatidylcholine (LPC) and lysophosphatidylethanolamine (LPE), but not on lysophosphatidylserine (LPS), and lysophosphatidylglycerol (LPG). It acts by transphosphatidylation, releasing exclusively cyclic phosphate products as second products. Induces dermonecrosis, hemolysis, increased vascular permeability, edema, inflammatory response, and platelet aggregation. This Loxosceles spinulosa (Recluse spider) protein is Dermonecrotic toxin LspiSicTox-betaIE1ii.